Consider the following 343-residue polypeptide: N-acetyl-gamma-glutamyl-phosphate reductase (343 aa).

The active site involves cysteine 147.

Belongs to the NAGSA dehydrogenase family. Type 1 subfamily.

Its subcellular location is the cytoplasm. It catalyses the reaction N-acetyl-L-glutamate 5-semialdehyde + phosphate + NADP(+) = N-acetyl-L-glutamyl 5-phosphate + NADPH + H(+). It functions in the pathway amino-acid biosynthesis; L-arginine biosynthesis; N(2)-acetyl-L-ornithine from L-glutamate: step 3/4. In terms of biological role, catalyzes the NADPH-dependent reduction of N-acetyl-5-glutamyl phosphate to yield N-acetyl-L-glutamate 5-semialdehyde. This chain is N-acetyl-gamma-glutamyl-phosphate reductase, found in Listeria monocytogenes serotype 4a (strain HCC23).